Consider the following 427-residue polypeptide: Inward rectifier potassium channel 2 (427 aa).

The Cytoplasmic portion of the chain corresponds to 1–81; that stretch reads MGSVRTNRYS…IFTTCVDIRW (81 aa). An S-nitrosocysteine modification is found at Cys-76. Residues 82–106 form a helical membrane-spanning segment; it reads RWMLVIFCLAFVLSWLFFGCVFWLI. At 107–128 the chain is on the extracellular side; the sequence is ALLHGDLDASKEGKACVSEVNS. Residues 129-140 constitute an intramembrane region (helical; Pore-forming); that stretch reads FTAAFLFSIETQ. The pore-forming intramembrane region spans 141-147; that stretch reads TTIGYGF. Positions 142–147 match the Selectivity filter motif; the sequence is TIGYGF. At 148–156 the chain is on the extracellular side; that stretch reads RCVTDECPI. A helical transmembrane segment spans residues 157–178; sequence AVFMVVFQSIVGCIIDAFIIGA. Residues 179–427 are Cytoplasmic-facing; the sequence is VMAKMAKPKK…PRPLRRESEI (249 aa). Residues 181 to 208 form a polyphosphoinositide (PIP2)-binding region; the sequence is AKMAKPKKRNETLVFSHNAVIAMRDGKL. A disordered region spans residues 384–427; that stretch reads SKEEDDSENGVPESTSTDTPPDIDLHNQASVPLEPRPLRRESEI. A PDZ-binding motif is present at residues 425–427; the sequence is SEI.

The protein belongs to the inward rectifier-type potassium channel (TC 1.A.2.1) family. KCNJ2 subfamily. Homotetramer. Homomultimeric and heteromultimeric association with KCNJ4/Kir2.3. Can form heteromeric channels with Kir2.6/KCNJ18. Associates, via its PDZ-recognition domain, with a complex containing LIN7A, LIN7B, LIN7C, DLG1, CASK and APBA1. In terms of processing, S-nitrosylation increases the open probability and inward rectifying currents.

It localises to the cell membrane. Its subcellular location is the sarcolemma. The protein resides in the T-tubule. The catalysed reaction is K(+)(in) = K(+)(out). Its activity is regulated as follows. Activated by phosphatidylinositol 4,5 biphosphate (PtdIns(4,5)P2). Its function is as follows. Inward rectifier potassium channels are characterized by a greater tendency to allow potassium to flow into the cell rather than out of it. Their voltage dependence is regulated by the concentration of extracellular potassium; as external potassium is raised, the voltage range of the channel opening shifts to more positive voltages. The inward rectification is mainly due to the blockage of outward current by internal magnesium. Can be blocked by extracellular barium or cesium. Probably participates in establishing action potential waveform and excitability of neuronal and muscle tissues. In Macaca mulatta (Rhesus macaque), this protein is Inward rectifier potassium channel 2 (KCNJ2).